The chain runs to 89 residues: Small ribosomal subunit protein uS15 (89 aa).

Belongs to the universal ribosomal protein uS15 family. In terms of assembly, part of the 30S ribosomal subunit. Forms a bridge to the 50S subunit in the 70S ribosome, contacting the 23S rRNA.

One of the primary rRNA binding proteins, it binds directly to 16S rRNA where it helps nucleate assembly of the platform of the 30S subunit by binding and bridging several RNA helices of the 16S rRNA. Its function is as follows. Forms an intersubunit bridge (bridge B4) with the 23S rRNA of the 50S subunit in the ribosome. In Lactobacillus johnsonii (strain CNCM I-12250 / La1 / NCC 533), this protein is Small ribosomal subunit protein uS15.